We begin with the raw amino-acid sequence, 381 residues long: 2-oxoglutarate-dependent dioxygenase FGSG_00048 (381 aa).

Belongs to the iron/ascorbate-dependent oxidoreductase family. Fe(2+) serves as cofactor.

Its pathway is mycotoxin biosynthesis. 2-oxoglutarate-dependent dioxygenase; part of the gene cluster that mediates the biosynthesis of gramillins A and B, bicyclic lipopeptides that induce cell death in maize leaves but not in wheat leaves. The nonribosomal peptide synthetase GRA1 incorporates respectively a glutamic adic (Glu), a leucine (Leu), a serine (Ser), a hydroxyglutamine (HOGln), a 2-amino decanoic acid, and 2 cysteins (CysB and CysA). The biosynthesis of 2-amino decanoic acid incorporated in gramillins could be initiated by a fatty acid synthase composed of the alpha and beta subunits FGSG_00036 and FGSG_11656. The cytochrome P450 monooxygenase FGSG_15680 could hydroxylate the fatty acid chain. Subsequent oxidation to the ketone by the oxidoreductase FGSG_00048 and transamination by aminotransferase FGSG_00049 could form 2-amino-decanoic acid. On the other hand, FGSG_15680 could also be responsible for the HO-modified glutamine at the gamma-position. Whether hydroxylation occurs on the fully assembled product or on the Gln residue prior to assembly into the gramillins requires further proof. The thioredoxin FGSG_00043 could also be required for the disulfide-bond formation between CysA and CysB. The specific involvement of the remaining proteins from the cluster is more difficult to discern, but could have broader regulatory (FGSG_00040 and FGSG_11657) or enzymatic functions (FGSG_00044 and FGSG_00045). The final C-domain of GRA1 does not possess the expected sequence of a termination CT domain, often implicated in macrocyclization and release of a cyclopeptidein fungal NRPs; and the thioesterase FGSG_00047 may act in concert with the terminal C-domain of GRA1 to catalyze the formation of the macrocyclic anhydride and release of the products. The polypeptide is 2-oxoglutarate-dependent dioxygenase FGSG_00048 (Gibberella zeae (strain ATCC MYA-4620 / CBS 123657 / FGSC 9075 / NRRL 31084 / PH-1) (Wheat head blight fungus)).